Here is a 591-residue protein sequence, read N- to C-terminus: Aspartate--tRNA ligase (591 aa).

Residue Glu171 participates in L-aspartate binding. Positions 195–198 (QLFK) are aspartate. Arg217 provides a ligand contact to L-aspartate. Residues 217–219 (RDE) and Gln226 each bind ATP. His448 serves as a coordination point for L-aspartate. An ATP-binding site is contributed by Glu482. Arg489 is a binding site for L-aspartate. 534–537 (GLDR) lines the ATP pocket.

It belongs to the class-II aminoacyl-tRNA synthetase family. Type 1 subfamily. In terms of assembly, homodimer.

It is found in the cytoplasm. It carries out the reaction tRNA(Asp) + L-aspartate + ATP = L-aspartyl-tRNA(Asp) + AMP + diphosphate. Catalyzes the attachment of L-aspartate to tRNA(Asp) in a two-step reaction: L-aspartate is first activated by ATP to form Asp-AMP and then transferred to the acceptor end of tRNA(Asp). In Vibrio cholerae serotype O1 (strain ATCC 39541 / Classical Ogawa 395 / O395), this protein is Aspartate--tRNA ligase.